The chain runs to 142 residues: Large ribosomal subunit protein uL11 (142 aa).

It belongs to the universal ribosomal protein uL11 family. As to quaternary structure, part of the ribosomal stalk of the 50S ribosomal subunit. Interacts with L10 and the large rRNA to form the base of the stalk. L10 forms an elongated spine to which L12 dimers bind in a sequential fashion forming a multimeric L10(L12)X complex. Post-translationally, one or more lysine residues are methylated.

In terms of biological role, forms part of the ribosomal stalk which helps the ribosome interact with GTP-bound translation factors. The chain is Large ribosomal subunit protein uL11 from Parvibaculum lavamentivorans (strain DS-1 / DSM 13023 / NCIMB 13966).